The sequence spans 117 residues: DNA-directed RNA polymerase subunit omega (117 aa).

Positions 96–105 are enriched in basic and acidic residues; it reads KEEAEEEAKQ. Residues 96 to 117 form a disordered region; that stretch reads KEEAEEEAKQKNSRAAKAAAAE. Residues 108–117 show a composition bias toward low complexity; sequence SRAAKAAAAE.

This sequence belongs to the RNA polymerase subunit omega family. In terms of assembly, the RNAP catalytic core consists of 2 alpha, 1 beta, 1 beta' and 1 omega subunit. When a sigma factor is associated with the core the holoenzyme is formed, which can initiate transcription.

It catalyses the reaction RNA(n) + a ribonucleoside 5'-triphosphate = RNA(n+1) + diphosphate. In terms of biological role, promotes RNA polymerase assembly. Latches the N- and C-terminal regions of the beta' subunit thereby facilitating its interaction with the beta and alpha subunits. This Lactococcus lactis subsp. lactis (strain IL1403) (Streptococcus lactis) protein is DNA-directed RNA polymerase subunit omega (rpoZ).